A 614-amino-acid chain; its full sequence is Serine/threonine-protein kinase Pkn1 (614 aa).

A Protein kinase domain is found at 13–276; that stretch reads YKVIAELGHG…TSGEQLQVTL (264 aa). Residues 19–27 and Lys-42 each bind ATP; that span reads LGHGLWSRD.

The protein belongs to the protein kinase superfamily. Ser/Thr protein kinase family. In terms of assembly, interacts with PknD, interacts with and phosphorylates IncG. Autophosphorylates on serine and threonine residues. Present in elementary bodies 40 hours post-infection as 2 proteins of approximately 70 and 65 kDa; the smaller one may be due to differential phosphorylation or degradation.

It catalyses the reaction L-seryl-[protein] + ATP = O-phospho-L-seryl-[protein] + ADP + H(+). It carries out the reaction L-threonyl-[protein] + ATP = O-phospho-L-threonyl-[protein] + ADP + H(+). Functionally, together with the serine/threonine kinase PknD, may play a role in specific interactions with host proteins during host intracellular growth. Autophosphorylates and phosphorylates IncG, an inclusion-membrane protein required for the modification of the nascent chlamydial inclusion. The protein is Serine/threonine-protein kinase Pkn1 (pkn1) of Chlamydia trachomatis serovar L2 (strain ATCC VR-902B / DSM 19102 / 434/Bu).